Reading from the N-terminus, the 175-residue chain is Large ribosomal subunit protein uL10 (175 aa).

The protein belongs to the universal ribosomal protein uL10 family. As to quaternary structure, part of the ribosomal stalk of the 50S ribosomal subunit. The N-terminus interacts with L11 and the large rRNA to form the base of the stalk. The C-terminus forms an elongated spine to which L12 dimers bind in a sequential fashion forming a multimeric L10(L12)X complex.

Forms part of the ribosomal stalk, playing a central role in the interaction of the ribosome with GTP-bound translation factors. This chain is Large ribosomal subunit protein uL10, found in Cyanothece sp. (strain PCC 7425 / ATCC 29141).